A 466-amino-acid chain; its full sequence is Probable Xaa-Pro aminopeptidase pepP (466 aa).

Residues Asp264, Asp275, Glu398, and Glu438 each coordinate Mn(2+).

This sequence belongs to the peptidase M24B family. It depends on Mn(2+) as a cofactor.

The catalysed reaction is Release of any N-terminal amino acid, including proline, that is linked to proline, even from a dipeptide or tripeptide.. Functionally, catalyzes the removal of a penultimate prolyl residue from the N-termini of peptides. The sequence is that of Probable Xaa-Pro aminopeptidase pepP (pepP) from Aspergillus clavatus (strain ATCC 1007 / CBS 513.65 / DSM 816 / NCTC 3887 / NRRL 1 / QM 1276 / 107).